The sequence spans 210 residues: Imidazoleglycerol-phosphate dehydratase (210 aa).

Belongs to the imidazoleglycerol-phosphate dehydratase family.

Its subcellular location is the cytoplasm. It catalyses the reaction D-erythro-1-(imidazol-4-yl)glycerol 3-phosphate = 3-(imidazol-4-yl)-2-oxopropyl phosphate + H2O. Its pathway is amino-acid biosynthesis; L-histidine biosynthesis; L-histidine from 5-phospho-alpha-D-ribose 1-diphosphate: step 6/9. In Mycobacterium leprae (strain Br4923), this protein is Imidazoleglycerol-phosphate dehydratase.